The chain runs to 554 residues: Carboxypeptidase Y homolog A (554 aa).

Residues 1 to 17 (MRIAASTVLFGAASAAS) form the signal peptide. A propeptide spanning residues 18–137 (FQQQAQHVLS…RLEEYNLRVK (120 aa)) is cleaved from the precursor. Cystine bridges form between Cys-191–Cys-431, Cys-325–Cys-339, Cys-349–Cys-372, Cys-356–Cys-365, and Cys-394–Cys-401. Asn-222 carries an N-linked (GlcNAc...) asparagine glycan. Ser-278 is a catalytic residue. Residue Asp-470 is part of the active site. Asn-518 carries N-linked (GlcNAc...) asparagine glycosylation. His-529 is an active-site residue.

The protein belongs to the peptidase S10 family.

Its subcellular location is the vacuole. The enzyme catalyses Release of a C-terminal amino acid with broad specificity.. Functionally, vacuolar carboxypeptidase involved in degradation of small peptides. Digests preferentially peptides containing an aliphatic or hydrophobic residue in P1' position, as well as methionine, leucine or phenylalanine in P1 position of ester substrate. The polypeptide is Carboxypeptidase Y homolog A (CPYA) (Chaetomium globosum (strain ATCC 6205 / CBS 148.51 / DSM 1962 / NBRC 6347 / NRRL 1970) (Soil fungus)).